A 209-amino-acid chain; its full sequence is NADH-ubiquinone oxidoreductase subunit 9 (209 aa).

The protein belongs to the complex I 30 kDa subunit family. As to quaternary structure, complex I is composed of about 30 different subunits.

Its subcellular location is the mitochondrion inner membrane. The catalysed reaction is a ubiquinone + NADH + 5 H(+)(in) = a ubiquinol + NAD(+) + 4 H(+)(out). Functionally, core subunit of the mitochondrial membrane respiratory chain NADH dehydrogenase (Complex I) that is believed to belong to the minimal assembly required for catalysis. Complex I functions in the transfer of electrons from NADH to the respiratory chain. The immediate electron acceptor for the enzyme is believed to be ubiquinone. This is NADH-ubiquinone oxidoreductase subunit 9 (NAD9) from Paramecium primaurelia.